The chain runs to 72 residues: Sperm protein associated with the nucleus on the X chromosome N1 (72 aa).

The tract at residues 1 to 40 (MEKPTSSTNGEKRKSPCDSNSKNDEMQETPNRDLVLEPSL) is disordered. Over residues 10–35 (GEKRKSPCDSNSKNDEMQETPNRDLV) the composition is skewed to basic and acidic residues.

It belongs to the SPAN-X family.

In Pan troglodytes (Chimpanzee), this protein is Sperm protein associated with the nucleus on the X chromosome N1 (SPANXN1).